Consider the following 108-residue polypeptide: Phosphoribosyl-ATP pyrophosphatase (108 aa).

It belongs to the PRA-PH family.

The protein localises to the cytoplasm. The catalysed reaction is 1-(5-phospho-beta-D-ribosyl)-ATP + H2O = 1-(5-phospho-beta-D-ribosyl)-5'-AMP + diphosphate + H(+). Its pathway is amino-acid biosynthesis; L-histidine biosynthesis; L-histidine from 5-phospho-alpha-D-ribose 1-diphosphate: step 2/9. In Aromatoleum aromaticum (strain DSM 19018 / LMG 30748 / EbN1) (Azoarcus sp. (strain EbN1)), this protein is Phosphoribosyl-ATP pyrophosphatase.